A 202-amino-acid chain; its full sequence is LexA repressor (202 aa).

The H-T-H motif DNA-binding region spans 28–48; sequence RAEIAQRLGFRSPNAAEEHLK. Active-site for autocatalytic cleavage activity residues include Ser119 and Lys156.

This sequence belongs to the peptidase S24 family. As to quaternary structure, homodimer.

The catalysed reaction is Hydrolysis of Ala-|-Gly bond in repressor LexA.. Represses a number of genes involved in the response to DNA damage (SOS response), including recA and lexA. Binds to the 16 bp palindromic sequence 5'-CTGTATATATATACAG-3'. In the presence of single-stranded DNA, RecA interacts with LexA causing an autocatalytic cleavage which disrupts the DNA-binding part of LexA, leading to derepression of the SOS regulon and eventually DNA repair. The chain is LexA repressor from Escherichia fergusonii (strain ATCC 35469 / DSM 13698 / CCUG 18766 / IAM 14443 / JCM 21226 / LMG 7866 / NBRC 102419 / NCTC 12128 / CDC 0568-73).